A 676-amino-acid chain; its full sequence is Electrogenic aspartate/glutamate antiporter SLC25A13, mitochondrial (676 aa).

Ala-2 is subject to N-acetylalanine. Residues Ala-2 to Pro-295 are regulatory N-terminal domain. The Mitochondrial intermembrane segment spans residues Ala-2–Arg-332. EF-hand domains lie at Ser-51 to Cys-86, Ala-87 to His-122, Ile-125 to Glu-157, and Ile-158 to His-193. The Ca(2+) site is built by Asp-66, Thr-68, Asp-70, Leu-72, and Glu-77. Residues Leu-296–Gln-312 form a linker loop domain region. A carrier domain region spans residues Phe-322 to Gly-613. 3 Solcar repeats span residues Ala-327 to Lys-419, Val-427 to Ser-511, and Val-519 to Trp-607. Residues Phe-333–Ile-350 traverse the membrane as a helical segment. Residues Asp-351 to Arg-393 are Mitochondrial matrix-facing. An N6-acetyllysine mark is found at Lys-354 and Lys-373. Residues Gly-394 to Asn-413 traverse the membrane as a helical segment. At Asp-414–Gly-436 the chain is on the mitochondrial intermembrane side. The helical transmembrane segment at Gly-437–Leu-450 threads the bilayer. The Mitochondrial matrix portion of the chain corresponds to Glu-451–Lys-485. Lys-454 carries the N6-methyllysine modification. The residue at position 485 (Lys-485) is an N6-acetyllysine; alternate. Residue Lys-485 is modified to N6-succinyllysine; alternate. A helical membrane pass occupies residues Gly-486–Tyr-505. Over Ala-506–Leu-524 the chain is Mitochondrial intermembrane. The helical transmembrane segment at Leu-525–Ala-542 threads the bilayer. Topologically, residues Asp-543 to Lys-581 are mitochondrial matrix. Lys-581 is subject to N6-succinyllysine. Residues Gly-582–Tyr-601 form a helical membrane-spanning segment. Topologically, residues Glu-602–Ser-676 are mitochondrial intermembrane. The interval Gly-614–Ser-676 is C-terminal domain. Lys-663 is subject to N6-acetyllysine. Ser-667 is modified (phosphoserine).

It belongs to the mitochondrial carrier (TC 2.A.29) family. In terms of assembly, homodimer (via N-terminus).

It localises to the mitochondrion inner membrane. The enzyme catalyses L-aspartate(in) + L-glutamate(out) + H(+)(out) = L-aspartate(out) + L-glutamate(in) + H(+)(in). It carries out the reaction 3-sulfino-L-alanine(out) + L-glutamate(in) + H(+)(in) = 3-sulfino-L-alanine(in) + L-glutamate(out) + H(+)(out). The catalysed reaction is 3-sulfino-L-alanine(out) + L-aspartate(in) = 3-sulfino-L-alanine(in) + L-aspartate(out). With respect to regulation, L-aspartate and 3-sulfino-L-alanine uptake are both inhibited by glisoxepide. Its function is as follows. Mitochondrial electrogenic aspartate/glutamate antiporter that favors efflux of aspartate and entry of glutamate and proton within the mitochondria as part of the malate-aspartate shuttle. Also mediates the uptake of L-cysteinesulfinate (3-sulfino-L-alanine) by mitochondria in exchange of L-glutamate and proton. Can also exchange L-cysteinesulfinate with aspartate in their anionic form without any proton translocation. Lacks transport activity towards gamma-aminobutyric acid (GABA). The polypeptide is Electrogenic aspartate/glutamate antiporter SLC25A13, mitochondrial (Rattus norvegicus (Rat)).